We begin with the raw amino-acid sequence, 374 residues long: MEMREKIAKAQRVVVKIGSALLTNDGQGLDVARIGLWVAQIAELRAQGKEVVLVSSGSIAAGMKRLGFSSRPTQVNELQAAAAVGQMELVGVYESHFEKHGLCTAQILLTHDDLSNRRRYLNARSSLRTLLGFGVVPIINENDTVVTDEIRFGDNDTLGALVANLVEADLLIILTDQQGLFDKNPRDHQDATLISHISASDNRLESMASGGAGVLGSGGMLTKVRAALLAARSGADTLIASGREENVIVRVASGEMMGTWLQPEHGRVAARKQWLAGHLKSRGALILDDGAVKALRKEGTSLLAVGVKDAQGTFSRGDMVVCVDLQGGLVARGLVNYSVAETLKLLGQPSSNIGAILGYKGEPELIHRDDLVII.

Lysine 16 serves as a coordination point for ATP. Residues serine 56, aspartate 143, and asparagine 155 each contribute to the substrate site. Residues 175–176 (TD) and 217–223 (SGGMLTK) each bind ATP. The 79-residue stretch at 282–360 (RGALILDDGA…SNIGAILGYK (79 aa)) folds into the PUA domain.

It belongs to the glutamate 5-kinase family.

Its subcellular location is the cytoplasm. The catalysed reaction is L-glutamate + ATP = L-glutamyl 5-phosphate + ADP. It participates in amino-acid biosynthesis; L-proline biosynthesis; L-glutamate 5-semialdehyde from L-glutamate: step 1/2. Its function is as follows. Catalyzes the transfer of a phosphate group to glutamate to form L-glutamate 5-phosphate. This is Glutamate 5-kinase from Marinomonas sp. (strain MWYL1).